Here is a 162-residue protein sequence, read N- to C-terminus: Phosphopantetheine adenylyltransferase (162 aa).

Thr-10 is a substrate binding site. ATP-binding positions include 10–11 (TF) and His-18. Substrate-binding residues include Lys-42, Leu-74, and Arg-88. ATP contacts are provided by residues 89–91 (GLR), Glu-99, and 124–130 (FSCISST).

Belongs to the bacterial CoaD family. Homohexamer. Mg(2+) serves as cofactor.

The protein localises to the cytoplasm. It carries out the reaction (R)-4'-phosphopantetheine + ATP + H(+) = 3'-dephospho-CoA + diphosphate. It functions in the pathway cofactor biosynthesis; coenzyme A biosynthesis; CoA from (R)-pantothenate: step 4/5. Its function is as follows. Reversibly transfers an adenylyl group from ATP to 4'-phosphopantetheine, yielding dephospho-CoA (dPCoA) and pyrophosphate. In Francisella tularensis subsp. novicida (strain U112), this protein is Phosphopantetheine adenylyltransferase.